Here is a 432-residue protein sequence, read N- to C-terminus: Tyrosine-protein phosphatase non-receptor type 1 (432 aa).

Met-1 carries the N-acetylmethionine modification. The Tyrosine-protein phosphatase domain maps to 3–277; that stretch reads MEKEFEQIDK…RFSYLAVIEG (275 aa). Tyr-20 bears the Phosphotyrosine mark. Residue Ser-50 is modified to Phosphoserine; by PKB/AKT1, CLK1 and CLK2. The residue at position 66 (Tyr-66) is a Phosphotyrosine; by EGFR. Substrate-binding positions include Asp-181 and 215-221; that span reads CSAGIGR. The active-site Phosphocysteine intermediate is the Cys-215. Cys-215 is subject to Cysteine persulfide. The residue at position 215 (Cys-215) is an S-nitrosocysteine; in reversibly inhibited form. Ser-242 and Ser-243 each carry phosphoserine; by CLK1 and CLK2. Gln-262 contributes to the substrate binding site. The tract at residues 297-322 is disordered; sequence EDLEPPPEHVPPPPRPPKRTLEPHNG. Residues Ser-335, Ser-362, and Ser-364 each carry the phosphoserine modification. The tract at residues 350-402 is disordered; it reads SRAPSIAVHSMSSMSQDTEVRKRMVGGGLQSAQASVPTEEELSPTEEEQKAHR. Phosphothreonine is present on Thr-367.

The protein belongs to the protein-tyrosine phosphatase family. Non-receptor class 1 subfamily. In terms of assembly, interacts with EPHA3 (phosphorylated); dephosphorylates EPHA3 and may regulate its trafficking and function. Interacts with MET. Interacts with NCK1. Post-translationally, ser-50 is the major site of phosphorylation as compared to Ser-242 and Ser-243. Activated by phosphorylation at Ser-50. S-nitrosylation of Cys-215 inactivates the enzyme activity. In terms of processing, sulfhydration at Cys-215 following endoplasmic reticulum stress inactivates the enzyme activity, promoting EIF2AK3/PERK activity. In terms of tissue distribution, found in several tissues including central nervous system, liver and kidney. A high level of expression was found in the hippocampus.

Its subcellular location is the endoplasmic reticulum membrane. The catalysed reaction is O-phospho-L-tyrosyl-[protein] + H2O = L-tyrosyl-[protein] + phosphate. Functionally, tyrosine-protein phosphatase which acts as a regulator of endoplasmic reticulum unfolded protein response. Mediates dephosphorylation of EIF2AK3/PERK; inactivating the protein kinase activity of EIF2AK3/PERK. May play an important role in CKII- and p60c-src-induced signal transduction cascades. May regulate the EFNA5-EPHA3 signaling pathway which modulates cell reorganization and cell-cell repulsion. May also regulate the hepatocyte growth factor receptor signaling pathway through dephosphorylation of MET. The protein is Tyrosine-protein phosphatase non-receptor type 1 (Ptpn1) of Rattus norvegicus (Rat).